The sequence spans 463 residues: Asparagine--tRNA ligase (463 aa).

Belongs to the class-II aminoacyl-tRNA synthetase family. In terms of assembly, homodimer.

It is found in the cytoplasm. The catalysed reaction is tRNA(Asn) + L-asparagine + ATP = L-asparaginyl-tRNA(Asn) + AMP + diphosphate + H(+). The polypeptide is Asparagine--tRNA ligase (Clostridium botulinum (strain Langeland / NCTC 10281 / Type F)).